The following is a 522-amino-acid chain: Protein nucleotidyltransferase YdiU (522 aa).

ATP-binding residues include Gly109, Gly111, Arg112, Lys132, Asp144, Gly145, Arg195, and Arg202. Asp271 functions as the Proton acceptor in the catalytic mechanism. Mg(2+) contacts are provided by Asn272 and Asp281. An ATP-binding site is contributed by Asp281.

This sequence belongs to the SELO family. Requires Mg(2+) as cofactor. The cofactor is Mn(2+).

The enzyme catalyses L-seryl-[protein] + ATP = 3-O-(5'-adenylyl)-L-seryl-[protein] + diphosphate. The catalysed reaction is L-threonyl-[protein] + ATP = 3-O-(5'-adenylyl)-L-threonyl-[protein] + diphosphate. It catalyses the reaction L-tyrosyl-[protein] + ATP = O-(5'-adenylyl)-L-tyrosyl-[protein] + diphosphate. It carries out the reaction L-histidyl-[protein] + UTP = N(tele)-(5'-uridylyl)-L-histidyl-[protein] + diphosphate. The enzyme catalyses L-seryl-[protein] + UTP = O-(5'-uridylyl)-L-seryl-[protein] + diphosphate. The catalysed reaction is L-tyrosyl-[protein] + UTP = O-(5'-uridylyl)-L-tyrosyl-[protein] + diphosphate. Functionally, nucleotidyltransferase involved in the post-translational modification of proteins. It can catalyze the addition of adenosine monophosphate (AMP) or uridine monophosphate (UMP) to a protein, resulting in modifications known as AMPylation and UMPylation. The chain is Protein nucleotidyltransferase YdiU from Burkholderia orbicola (strain MC0-3).